The following is a 403-amino-acid chain: Phosphoglycerate kinase (403 aa).

Residues 24 to 26 (DLN), Arg-39, 62 to 65 (HLGR), Arg-121, and Arg-161 each bind substrate. ATP contacts are provided by residues Lys-211, Gly-299, Glu-330, and 359 to 362 (GGDS).

The protein belongs to the phosphoglycerate kinase family. Monomer.

The protein resides in the cytoplasm. The enzyme catalyses (2R)-3-phosphoglycerate + ATP = (2R)-3-phospho-glyceroyl phosphate + ADP. The protein operates within carbohydrate degradation; glycolysis; pyruvate from D-glyceraldehyde 3-phosphate: step 2/5. The protein is Phosphoglycerate kinase of Corynebacterium jeikeium (strain K411).